Reading from the N-terminus, the 479-residue chain is Ribosomal RNA small subunit methyltransferase F (479 aa).

S-adenosyl-L-methionine is bound by residues 125–131 (AAAPGSK), Glu149, Asp176, and Asp194. Residue Cys247 is the Nucleophile of the active site.

The protein belongs to the class I-like SAM-binding methyltransferase superfamily. RsmB/NOP family.

Its subcellular location is the cytoplasm. The enzyme catalyses cytidine(1407) in 16S rRNA + S-adenosyl-L-methionine = 5-methylcytidine(1407) in 16S rRNA + S-adenosyl-L-homocysteine + H(+). Its function is as follows. Specifically methylates the cytosine at position 1407 (m5C1407) of 16S rRNA. This Citrobacter koseri (strain ATCC BAA-895 / CDC 4225-83 / SGSC4696) protein is Ribosomal RNA small subunit methyltransferase F.